A 1487-amino-acid polypeptide reads, in one-letter code: Adhesion G protein-coupled receptor L2 (1487 aa).

The N-terminal stretch at 1–25 is a signal peptide; that stretch reads MVSSGCRMRSLWFIIIISFSPSTEG. At 26-855 the chain is on the extracellular side; that stretch reads FSRAALPFGL…VHHLLLTVIT (830 aa). The region spanning 41–130 is the SUEL-type lectin domain; sequence SCEGYSIDLR…KYLEVQYECV (90 aa). N-linked (GlcNAc...) asparagine glycosylation is present at Asn-99. Residues 139–398 enclose the Olfactomedin-like domain; that stretch reads VCPGTLKAIV…ILRYSLEFGP (260 aa). Polar residues predominate over residues 423-439; that stretch reads STTSSASQRGPVSSTAA. Residues 423 to 461 form a disordered region; sequence STTSSASQRGPVSSTAAGPQDGSRGTKPPPAVSTTKIPP. N-linked (GlcNAc...) asparagine glycans are attached at residues Asn-524 and Asn-735. Positions 663–841 constitute a GAIN-B domain; it reads TRVSMPTENI…AILMAHREIA (179 aa). 2 disulfide bridges follow: Cys-792/Cys-823 and Cys-811/Cys-825. Positions 792–841 are GPS; the sequence is CSFWNYSERTMMGYWSTQGCKLVDTNKTRTTCACSHLTNFAILMAHREIA. The tract at residues 829–841 is stachel; it reads TNFAILMAHREIA. Residues 856 to 876 form a helical membrane-spanning segment; it reads WVGIVVSLVCLAICIFTFCFF. The Cytoplasmic portion of the chain corresponds to 877–884; that stretch reads RGLQSDRN. Residues 885–905 form a helical membrane-spanning segment; it reads TIHKNLCINLFIAEFIFLIGI. Residues 906–911 lie on the Extracellular side of the membrane; it reads DKTKYT. Residues 912–932 form a helical membrane-spanning segment; the sequence is IACPVFAGLLHFFFLAAFSWM. Over 933 to 955 the chain is Cytoplasmic; the sequence is CLEGVQLYLMLVEVFESEYSRKK. The chain crosses the membrane as a helical span at residues 956-976; sequence YYYVAGYLFPATVVGVSAAID. Over 977 to 994 the chain is Extracellular; that stretch reads YKSYGTVQACWLHVDNYF. Residues 995-1015 form a helical membrane-spanning segment; it reads IWSFIGPVTFIILLNIIFLVI. At 1016 to 1064 the chain is on the cytoplasmic side; the sequence is TLCKMVKHSNTLKPDSSRLENINNYRVCDGYYNTDLPGYEDNKPFIKSW. A helical membrane pass occupies residues 1065-1085; the sequence is VLGAFALLCLLGLTWSFGLLF. Topologically, residues 1086 to 1090 are extracellular; the sequence is VNEET. A helical transmembrane segment spans residues 1091–1111; the sequence is VVMAYLFTAFNAFQGLFIFIF. The disordered stretch occupies residues 1386–1430; sequence EADDHLQSPNRDSLYTSMPNLRDSPYPESSPDMAEDLSPSRRSEN. Polar residues predominate over residues 1392–1404; that stretch reads QSPNRDSLYTSMP. Phosphoserine occurs at positions 1402, 1437, and 1458.

It belongs to the G-protein coupled receptor 2 family. Adhesion G-protein coupled receptor (ADGR) subfamily. In terms of assembly, heterodimer of 2 chains generated by proteolytic processing; the large extracellular N-terminal fragment and the membrane-bound C-terminal fragment predominantly remain associated and non-covalently linked. Autoproteolytically processed at the GPS region of the GAIN-B domain; this cleavage modulates receptor activity. In terms of tissue distribution, ubiquitously expressed. In neurons, specifically localizes to dendritic domains of CA1 pyramidal neurons in the S. lacunosummoleculare.

It is found in the postsynaptic cell membrane. Forms a heterodimer of 2 chains generated by proteolytic processing that remain associated through non-covalent interactions mediated by the GAIN-B domain. In the inactivated receptor, the Stachel sequence (also named stalk) is embedded in the GAIN-B domain, where it adopts a beta-strand conformation. On activation, the Stachel moves into the 7 transmembrane region and adopts a twisted hook-shaped configuration that forms contacts within the receptor, leading to coupling of a G-alpha protein, which activates signaling. The cleaved GAIN-B and N-terminal domains can then dissociate from the rest of the receptor. Functionally, orphan adhesion G-protein coupled receptor (aGPCR), which mediates synapse specificity. Ligand binding causes a conformation change that triggers signaling via guanine nucleotide-binding proteins (G proteins) and modulates the activity of downstream effectors. Following G-protein coupled receptor activation, associates with cell adhesion molecules that are expressed at the surface of adjacent cells to direct synapse specificity. Specifically mediates the establishment of perforant-path synapses on CA1-region pyramidal neurons in the hippocampus. Localizes to postsynaptic spines in excitatory synapses in the S.lacunosum-moleculare and interacts with presynaptic cell adhesion molecules, such as teneurins, promoting synapse formation. This Mus musculus (Mouse) protein is Adhesion G protein-coupled receptor L2.